Here is a 516-residue protein sequence, read N- to C-terminus: Coiled-coil domain-containing protein 149 (516 aa).

Residues 1–18 (MANQLRERHQSLKKKYGE) are compositionally biased toward basic and acidic residues. The interval 1–29 (MANQLRERHQSLKKKYGELIDGDPSVPPE) is disordered. 2 coiled-coil regions span residues 1-195 (MANQ…ALEK) and 259-286 (IQHQ…LEVS). The span at 321-332 (PHHKPLTNEEHG) shows a compositional bias: basic and acidic residues. Disordered regions lie at residues 321-350 (PHHK…SDNE) and 406-452 (ETSF…SLGD). Polar residues predominate over residues 414–436 (DSQSTASSQENHDNLQSPFSSPE).

It belongs to the CCDC149 family.

The chain is Coiled-coil domain-containing protein 149 (ccdc149) from Xenopus laevis (African clawed frog).